The chain runs to 145 residues: U1 small nuclear ribonucleoprotein C (145 aa).

The Matrin-type zinc finger occupies 4–36; sequence YYCDYCDTYLTHDSPSVRKTHCTGRKHRDNVKF. Residues 67-91 form a disordered region; the sequence is FAGGPGGAPPKPAGVSIPPPNMGAP. Positions 73–91 are enriched in pro residues; it reads GAPPKPAGVSIPPPNMGAP.

It belongs to the U1 small nuclear ribonucleoprotein C family. In terms of assembly, U1 snRNP is composed of the 7 core Sm proteins B/B', D1, D2, D3, E, F and G that assemble in a heptameric protein ring on the Sm site of the small nuclear RNA to form the core snRNP, and at least 3 U1 snRNP-specific proteins U1-70K, U1-A and U1-C. U1-C interacts with U1 snRNA and the 5' splice-site region of the pre-mRNA.

It localises to the nucleus. Component of the spliceosomal U1 snRNP, which is essential for recognition of the pre-mRNA 5' splice-site and the subsequent assembly of the spliceosome. U1-C is directly involved in initial 5' splice-site recognition for both constitutive and regulated alternative splicing. The interaction with the 5' splice-site seems to precede base-pairing between the pre-mRNA and the U1 snRNA. Stimulates commitment or early (E) complex formation by stabilizing the base pairing of the 5' end of the U1 snRNA and the 5' splice-site region. Regulates alternative splicing of a distinct group of target genes. The chain is U1 small nuclear ribonucleoprotein C from Drosophila melanogaster (Fruit fly).